Consider the following 198-residue polypeptide: Coagulation factor XIII A chain (198 aa).

The tract at residues 1–36 is disordered; it reads MSESSGTAFGGRRAIPPNTSNAAENDPPTVELQGLV. At Ser2 the chain carries N-acetylserine. Residues 2-38 constitute a propeptide, activation peptide; the sequence is SESSGTAFGGRRAIPPNTSNAAENDPPTVELQGLVPR.

The protein belongs to the transglutaminase superfamily. Transglutaminase family. As to quaternary structure, tetramer of two A chains (F13A1) and two B (F13B) chains. The cofactor is Ca(2+). Post-translationally, the activation peptide is released by thrombin.

It is found in the cytoplasm. The protein resides in the secreted. The enzyme catalyses L-glutaminyl-[protein] + L-lysyl-[protein] = [protein]-L-lysyl-N(6)-5-L-glutamyl-[protein] + NH4(+). Factor XIII is activated by thrombin and calcium ion to a transglutaminase that catalyzes the formation of gamma-glutamyl-epsilon-lysine cross-links between fibrin chains, thus stabilizing the fibrin clot. Also cross-link alpha-2-plasmin inhibitor, or fibronectin, to the alpha chains of fibrin. In Bos taurus (Bovine), this protein is Coagulation factor XIII A chain (F13A1).